Reading from the N-terminus, the 74-residue chain is MASLTLEEIETMLDDMKKKLNVVNASVITSDSVSPAKHDDLIALHAHVMRSPSFSISEMDEIVQELGQLRGRKS.

The protein belongs to the UPF0435 family.

The polypeptide is UPF0435 protein ABC2298 (Shouchella clausii (strain KSM-K16) (Alkalihalobacillus clausii)).